The primary structure comprises 218 residues: DNA-directed RNA polymerases IV and V subunit 5B (218 aa).

This sequence belongs to the archaeal Rpo5/eukaryotic RPB5 RNA polymerase subunit family. Component of the RNA polymerase IV and V complexes. Interacts with NRPD1. In terms of tissue distribution, expressed inleaves, flower buds, flowers and siliques.

Its subcellular location is the nucleus. Functionally, DNA-dependent RNA polymerase catalyzes the transcription of DNA into RNA using the four ribonucleoside triphosphates as substrates. Component of RNA polymerases IV and V which mediate short-interfering RNAs (siRNA) accumulation and subsequent RNA-directed DNA methylation-dependent (RdDM) transcriptional gene silencing (TGS) of endogenous repeated sequences, including transposable elements. The sequence is that of DNA-directed RNA polymerases IV and V subunit 5B (NRPD5B) from Arabidopsis thaliana (Mouse-ear cress).